Consider the following 67-residue polypeptide: Small ribosomal subunit protein bS21 (67 aa).

It belongs to the bacterial ribosomal protein bS21 family.

This Magnetococcus marinus (strain ATCC BAA-1437 / JCM 17883 / MC-1) protein is Small ribosomal subunit protein bS21.